Consider the following 325-residue polypeptide: Tagatose 1,6-diphosphate aldolase 1 (325 aa).

Belongs to the aldolase LacD family.

It carries out the reaction D-tagatofuranose 1,6-bisphosphate = D-glyceraldehyde 3-phosphate + dihydroxyacetone phosphate. The protein operates within carbohydrate metabolism; D-tagatose 6-phosphate degradation; D-glyceraldehyde 3-phosphate and glycerone phosphate from D-tagatose 6-phosphate: step 2/2. The protein is Tagatose 1,6-diphosphate aldolase 1 (lacD1) of Streptococcus pyogenes serotype M3 (strain SSI-1).